A 278-amino-acid polypeptide reads, in one-letter code: MQIMLCAISNIASGNCSEDCKYCTQSAHVKTDIQKYRRKELSQIVLEAKMAKKNEALGFCLVTAGLGLDDEKLEYVCEAAKAVQKEAPNLLLIACNGMASVEQLKELKKAGIFSYNHNLESSKEFFPQICTTHTWESRFQTNLNAKEAGLMLCCGGIYGMGESEEDRLSFRKSLQELQPFSTPINFFIANENLKLQVPRLSVDEALKIVRDTKEALPQSVVMVAGGREVVLRERQYEIFQAGAGAIVIGDYLTTKGEEPSQDIIKLKEMGFTFASECH.

Residues 1–227 (MQIMLCAISN…QSVVMVAGGR (227 aa)) enclose the Radical SAM core domain. Residues cysteine 16, cysteine 20, and cysteine 23 each coordinate [4Fe-4S] cluster. The [2Fe-2S] cluster site is built by cysteine 60, cysteine 95, and cysteine 153.

It belongs to the radical SAM superfamily. Biotin synthase family. Homodimer. [4Fe-4S] cluster serves as cofactor. [2Fe-2S] cluster is required as a cofactor.

It carries out the reaction (4R,5S)-dethiobiotin + (sulfur carrier)-SH + 2 reduced [2Fe-2S]-[ferredoxin] + 2 S-adenosyl-L-methionine = (sulfur carrier)-H + biotin + 2 5'-deoxyadenosine + 2 L-methionine + 2 oxidized [2Fe-2S]-[ferredoxin]. It participates in cofactor biosynthesis; biotin biosynthesis; biotin from 7,8-diaminononanoate: step 2/2. Catalyzes the conversion of dethiobiotin (DTB) to biotin by the insertion of a sulfur atom into dethiobiotin via a radical-based mechanism. This is Biotin synthase from Campylobacter jejuni (strain RM1221).